A 417-amino-acid polypeptide reads, in one-letter code: Gelsolin (417 aa).

A Gelsolin-like 4 repeat occupies 93 to 171 (KVPVLESHYG…VVQGKEPAHL (79 aa)). Ca(2+)-binding residues include G107, D108, E138, D150, G155, P157, T187, N227, D228, E250, D331, D332, and E354. 2 Gelsolin-like repeats span residues 213-261 (RAVE…LKIL) and 316-392 (IEEV…PTFI).

The protein belongs to the villin/gelsolin family.

The protein resides in the cytoplasm. It localises to the cytoskeleton. In terms of biological role, calcium-regulated, actin-modulating protein that binds to the plus (or barbed) ends of actin monomers or filaments, preventing monomer exchange (end-blocking or capping). It can promote the assembly of monomers into filaments (nucleation) as well as sever filaments already formed. Plays a role in ciliogenesis. This chain is Gelsolin (gsn), found in Xenopus laevis (African clawed frog).